A 147-amino-acid chain; its full sequence is Ribosomal RNA large subunit methyltransferase H (147 aa).

S-adenosyl-L-methionine-binding positions include Leu-64, Gly-95, and 114–119 (LSSLTL).

It belongs to the RNA methyltransferase RlmH family. As to quaternary structure, homodimer.

The protein resides in the cytoplasm. It carries out the reaction pseudouridine(1915) in 23S rRNA + S-adenosyl-L-methionine = N(3)-methylpseudouridine(1915) in 23S rRNA + S-adenosyl-L-homocysteine + H(+). Functionally, specifically methylates the pseudouridine at position 1915 (m3Psi1915) in 23S rRNA. In Polynucleobacter asymbioticus (strain DSM 18221 / CIP 109841 / QLW-P1DMWA-1) (Polynucleobacter necessarius subsp. asymbioticus), this protein is Ribosomal RNA large subunit methyltransferase H.